A 41-amino-acid chain; its full sequence is Large ribosomal subunit protein bL36 (41 aa).

The protein belongs to the bacterial ribosomal protein bL36 family.

This chain is Large ribosomal subunit protein bL36, found in Jannaschia sp. (strain CCS1).